Reading from the N-terminus, the 374-residue chain is uncharacterized protein (374 aa).

A divalent metal cation is bound by residues D158, H160, D190, N221, H312, and H314.

The protein belongs to the metallophosphoesterase superfamily. It depends on a divalent metal cation as a cofactor.

This is an uncharacterized protein from Campylobacter jejuni subsp. jejuni serotype O:2 (strain ATCC 700819 / NCTC 11168).